A 76-amino-acid chain; its full sequence is UPF0248 protein MmarC6_0667 (76 aa).

Belongs to the UPF0248 family.

The sequence is that of UPF0248 protein MmarC6_0667 from Methanococcus maripaludis (strain C6 / ATCC BAA-1332).